We begin with the raw amino-acid sequence, 187 residues long: Protein GrpE (187 aa).

Residues 1 to 38 (MSEEKQTVEQNETEEQEIIEEQAAADEQQEETNESELL) form a disordered region. Over residues 11–34 (NETEEQEIIEEQAAADEQQEETNE) the composition is skewed to acidic residues.

Belongs to the GrpE family. In terms of assembly, homodimer.

It is found in the cytoplasm. Functionally, participates actively in the response to hyperosmotic and heat shock by preventing the aggregation of stress-denatured proteins, in association with DnaK and GrpE. It is the nucleotide exchange factor for DnaK and may function as a thermosensor. Unfolded proteins bind initially to DnaJ; upon interaction with the DnaJ-bound protein, DnaK hydrolyzes its bound ATP, resulting in the formation of a stable complex. GrpE releases ADP from DnaK; ATP binding to DnaK triggers the release of the substrate protein, thus completing the reaction cycle. Several rounds of ATP-dependent interactions between DnaJ, DnaK and GrpE are required for fully efficient folding. The chain is Protein GrpE from Bacillus subtilis (strain 168).